We begin with the raw amino-acid sequence, 361 residues long: tRNA/tmRNA (uracil-C(5))-methyltransferase (361 aa).

Positions 185, 213, 218, 234, and 294 each coordinate S-adenosyl-L-methionine. Cysteine 319 functions as the Nucleophile in the catalytic mechanism. Glutamate 353 acts as the Proton acceptor in catalysis.

Belongs to the class I-like SAM-binding methyltransferase superfamily. RNA M5U methyltransferase family. TrmA subfamily.

The catalysed reaction is uridine(54) in tRNA + S-adenosyl-L-methionine = 5-methyluridine(54) in tRNA + S-adenosyl-L-homocysteine + H(+). It catalyses the reaction uridine(341) in tmRNA + S-adenosyl-L-methionine = 5-methyluridine(341) in tmRNA + S-adenosyl-L-homocysteine + H(+). In terms of biological role, dual-specificity methyltransferase that catalyzes the formation of 5-methyluridine at position 54 (m5U54) in all tRNAs, and that of position 341 (m5U341) in tmRNA (transfer-mRNA). This is tRNA/tmRNA (uracil-C(5))-methyltransferase from Pseudomonas putida (strain GB-1).